A 223-amino-acid polypeptide reads, in one-letter code: Suppressor of hydroxyurea sensitivity protein 2 (223 aa).

This sequence belongs to the SHU2 family. As to quaternary structure, component of the SHU complex composed of at least CSM2, PSY3, SHU1 and SHU2.

Its subcellular location is the nucleus. Plays a role in a RAD51/RAD54-dependent homologous recombination repair (HRR) pathway to repair MMS-induced lesions during S-phase. Required for error-free repair of spontaneous and induced DNA lesions to protect the genome from mutation. The polypeptide is Suppressor of hydroxyurea sensitivity protein 2 (SHU2) (Saccharomyces cerevisiae (strain ATCC 204508 / S288c) (Baker's yeast)).